The primary structure comprises 119 residues: Chorion class CA protein ERA.1 (119 aa).

The signal sequence occupies residues 1–21 (MSTFAVLLLCVQACLIQNVYS). The segment at 22–55 (QCLGRVGPGGPPLGPYGGPLGGPGYGPVGYGGCG) is left arm. The central domain stretch occupies residues 56-103 (GYGGSGIGNVAVAGELPVAGSTGVMGQVPVIGAVEFAGPACAVGSVSI). The tract at residues 104-119 (SGACGPTCGCGGSPYY) is right arm.

Belongs to the chorion protein family.

In terms of biological role, this protein is one of many from the eggshell of the silk moth. The chain is Chorion class CA protein ERA.1 (ERA.1) from Bombyx mori (Silk moth).